We begin with the raw amino-acid sequence, 122 residues long: Flowering-promoting factor 1-like protein 3 (122 aa).

The segment at 16–36 (ENPGSEESSSAGDGGGGGRRK) is disordered.

Belongs to the FPF1 family.

The sequence is that of Flowering-promoting factor 1-like protein 3 from Oryza sativa subsp. japonica (Rice).